The chain runs to 189 residues: Putative ankyrin repeat protein TV1425 (189 aa).

ANK repeat units follow at residues 31 to 60 (YNRT…KLED), 64 to 93 (EGST…NVNT), 97 to 126 (SGKT…NVND), and 130 to 159 (EGET…DISA).

In Thermoplasma volcanium (strain ATCC 51530 / DSM 4299 / JCM 9571 / NBRC 15438 / GSS1), this protein is Putative ankyrin repeat protein TV1425.